The primary structure comprises 433 residues: Glutamate-1-semialdehyde 2,1-aminomutase (433 aa).

N6-(pyridoxal phosphate)lysine is present on Lys-271.

The protein belongs to the class-III pyridoxal-phosphate-dependent aminotransferase family. HemL subfamily. As to quaternary structure, homodimer. Pyridoxal 5'-phosphate is required as a cofactor.

It is found in the cytoplasm. The enzyme catalyses (S)-4-amino-5-oxopentanoate = 5-aminolevulinate. The protein operates within porphyrin-containing compound metabolism; protoporphyrin-IX biosynthesis; 5-aminolevulinate from L-glutamyl-tRNA(Glu): step 2/2. It functions in the pathway porphyrin-containing compound metabolism; chlorophyll biosynthesis. This chain is Glutamate-1-semialdehyde 2,1-aminomutase, found in Prochlorococcus marinus (strain MIT 9301).